Here is a 194-residue protein sequence, read N- to C-terminus: Adenylate kinase (194 aa).

11 to 16 is an ATP binding site; it reads GSGKGT. The interval 31–60 is NMP; sequence STGELLRAEIKAQTELGQAAAGYINEGHLV. Residues Thr-32, Arg-37, 58 to 60, 86 to 89, and Gln-93 contribute to the AMP site; these read HLV and GFPR. Residues 127–137 are LID; sequence NRGKVSGRSDD. Residue Arg-128 coordinates ATP. AMP-binding residues include Arg-134 and Arg-145. Gly-173 contacts ATP.

It belongs to the adenylate kinase family. As to quaternary structure, monomer.

Its subcellular location is the cytoplasm. The catalysed reaction is AMP + ATP = 2 ADP. The protein operates within purine metabolism; AMP biosynthesis via salvage pathway; AMP from ADP: step 1/1. Its function is as follows. Catalyzes the reversible transfer of the terminal phosphate group between ATP and AMP. Plays an important role in cellular energy homeostasis and in adenine nucleotide metabolism. The protein is Adenylate kinase of Porphyromonas gingivalis (strain ATCC BAA-308 / W83).